A 487-amino-acid polypeptide reads, in one-letter code: Homeobox protein homothorax (487 aa).

Disordered regions lie at residues 25–49, 210–292, and 333–369; these read YDPHAGHRPPGLQGLPSHHSPHMTH, DTTK…SSLN, and NFGTSASGDASNASIGSGEGTGEEDDDASGKKNQKKR. Residues 127–211 enclose the MEIS N-terminal domain; sequence GGDVCSSESF…IDLVIDERDT (85 aa). Polar residues-rich tracts occupy residues 227-237 and 333-345; these read NADSTSHTDGA and NFGTSASGDASNA. Residues 365–427 constitute a DNA-binding region (homeobox; TALE-type); it reads NQKKRGIFPK…NARRRIVQPM (63 aa).

The protein belongs to the TALE/MEIS homeobox family. As to quaternary structure, interacts with exd; required for nuclear translocation of exd. In terms of tissue distribution, in the wing disk, the expression is present in the regions corresponding to notum, wing hinge and ventral pleura. In the leg disk, the expression is in the periphery region, corresponding to the proximal segments of the legs. In the antennal disk, the expression is in all but the arista region. In the eye disk, the expression is strong in the anterior region surrounding the eye field, including the regions corresponding to ptilinum, ocellus and head capsules, and weak in the posterior and lateral margins of the eye disk. Expressed specifically in maturating inner photoreceptors of the DRA and maintained through adulthood.

It is found in the nucleus. In terms of biological role, all isoforms are required for patterning of the embryonic cuticle. Acts with exd to delimit the eye field and prevent inappropriate eye development. Isoforms that carry the homeodomain are required for proper localization of chordotonal organs within the peripheral nervous system and antennal identity; required to activate antennal-specific genes, such as sal and to repress the leg-like expression of dac. Necessary for the nuclear localization of the essential HOX cofactor, extradenticle (exd). Both necessary and sufficient for inner photoreceptors to adopt the polarization-sensitive 'dorsal rim area' (DRA) of the eye fate instead of the color-sensitive default state. This occurs by increasing rhabdomere size and uncoupling R7-R8 communication to allow both cells to express the same opsin rather than different ones as required for color vision. This is Homeobox protein homothorax from Drosophila melanogaster (Fruit fly).